The chain runs to 325 residues: Polyamine aminopropyltransferase (325 aa).

One can recognise a PABS domain in the interval Ser11–Asp248. Gln44 lines the S-methyl-5'-thioadenosine pocket. Spermidine-binding residues include His75 and Asp99. Residues Glu119 and Asp151–Gly152 each bind S-methyl-5'-thioadenosine. Asp169 serves as the catalytic Proton acceptor. An S-methyl-5'-thioadenosine-binding site is contributed by Pro176.

This sequence belongs to the spermidine/spermine synthase family. Homodimer or homotetramer.

Its subcellular location is the cytoplasm. It catalyses the reaction S-adenosyl 3-(methylsulfanyl)propylamine + putrescine = S-methyl-5'-thioadenosine + spermidine + H(+). It participates in amine and polyamine biosynthesis; spermidine biosynthesis; spermidine from putrescine: step 1/1. Catalyzes the irreversible transfer of a propylamine group from the amino donor S-adenosylmethioninamine (decarboxy-AdoMet) to putrescine (1,4-diaminobutane) to yield spermidine. The protein is Polyamine aminopropyltransferase of Nitrosomonas europaea (strain ATCC 19718 / CIP 103999 / KCTC 2705 / NBRC 14298).